A 467-amino-acid polypeptide reads, in one-letter code: Asparagine--tRNA ligase (467 aa).

Belongs to the class-II aminoacyl-tRNA synthetase family. Homodimer.

The protein resides in the cytoplasm. It catalyses the reaction tRNA(Asn) + L-asparagine + ATP = L-asparaginyl-tRNA(Asn) + AMP + diphosphate + H(+). The chain is Asparagine--tRNA ligase from Mannheimia succiniciproducens (strain KCTC 0769BP / MBEL55E).